The primary structure comprises 498 residues: NADH-quinone oxidoreductase subunit N 2 (498 aa).

14 helical membrane-spanning segments follow: residues 19–39 (VATQ…IALF), 47–67 (IVGY…IPLW), 83–103 (YSLT…VLSL), 114–134 (SEYY…AQGA), 136–156 (LIIL…LTGF), 171–191 (LLIG…LYGA), 215–235 (IYLL…VAMA), 249–269 (PTPI…AALL), 282–302 (IWAP…NIGA), 317–337 (IGHA…GGIA), 345–365 (VLLY…VLIA), 389–409 (LAVA…TGGF), 420–440 (WLSG…IAAF), and 468–488 (AGLA…TPAI).

The protein belongs to the complex I subunit 2 family. NDH-1 is composed of 14 different subunits. Subunits NuoA, H, J, K, L, M, N constitute the membrane sector of the complex.

It localises to the cell membrane. It carries out the reaction a quinone + NADH + 5 H(+)(in) = a quinol + NAD(+) + 4 H(+)(out). NDH-1 shuttles electrons from NADH, via FMN and iron-sulfur (Fe-S) centers, to quinones in the respiratory chain. The immediate electron acceptor for the enzyme in this species is believed to be ubiquinone. Couples the redox reaction to proton translocation (for every two electrons transferred, four hydrogen ions are translocated across the cytoplasmic membrane), and thus conserves the redox energy in a proton gradient. This Roseiflexus castenholzii (strain DSM 13941 / HLO8) protein is NADH-quinone oxidoreductase subunit N 2.